The sequence spans 250 residues: Imidazole glycerol phosphate synthase subunit HisF (250 aa).

Residues aspartate 11 and aspartate 130 contribute to the active site.

Belongs to the HisA/HisF family. As to quaternary structure, heterodimer of HisH and HisF.

The protein resides in the cytoplasm. It carries out the reaction 5-[(5-phospho-1-deoxy-D-ribulos-1-ylimino)methylamino]-1-(5-phospho-beta-D-ribosyl)imidazole-4-carboxamide + L-glutamine = D-erythro-1-(imidazol-4-yl)glycerol 3-phosphate + 5-amino-1-(5-phospho-beta-D-ribosyl)imidazole-4-carboxamide + L-glutamate + H(+). The protein operates within amino-acid biosynthesis; L-histidine biosynthesis; L-histidine from 5-phospho-alpha-D-ribose 1-diphosphate: step 5/9. Functionally, IGPS catalyzes the conversion of PRFAR and glutamine to IGP, AICAR and glutamate. The HisF subunit catalyzes the cyclization activity that produces IGP and AICAR from PRFAR using the ammonia provided by the HisH subunit. The chain is Imidazole glycerol phosphate synthase subunit HisF from Bacteroides fragilis (strain YCH46).